A 650-amino-acid chain; its full sequence is Probable basic-leucine zipper transcription factor K (650 aa).

Residues 37–180 are a coiled coil; that stretch reads IDNNNNNYSN…KQQKQQQQEQ (144 aa). 2 disordered regions span residues 109–130 and 242–279; these read IPQQ…QEQE and TTLN…NNNL. Residues 118–129 are compositionally biased toward acidic residues; that stretch reads DQQEDQDQEQEQ. Over residues 242–251 the composition is skewed to polar residues; sequence TTLNTNLQSD. Low complexity predominate over residues 252–278; sequence NNNNNNNNNNNNNNNNNNNNNNNNNNN. Residues 259 to 286 are a coiled coil; it reads NNNNNNNNNNNNNNNNNNNNLLNEKQIE. One can recognise a bZIP domain in the interval 305 to 368; the sequence is FNKIEKGKRN…IEIMRSEPES (64 aa). The segment at 307–327 is basic motif; that stretch reads KIEKGKRNQTESSKNFRERKK. The interval 330–337 is leucine-zipper; it reads IKDIELKL. Over residues 452 to 466 the composition is skewed to low complexity; that stretch reads NNNNNNNNNNNNNNN. Residues 452–473 form a disordered region; sequence NNNNNNNNNNNNNNNDNDDDNE.

Belongs to the bZIP family.

Its subcellular location is the nucleus. Probable transcriptional regulator. This is Probable basic-leucine zipper transcription factor K (bzpK) from Dictyostelium discoideum (Social amoeba).